A 419-amino-acid chain; its full sequence is D-amino acid dehydrogenase (419 aa).

Residue V3 to Y17 coordinates FAD.

The protein belongs to the DadA oxidoreductase family. It depends on FAD as a cofactor.

It carries out the reaction a D-alpha-amino acid + A + H2O = a 2-oxocarboxylate + AH2 + NH4(+). Its pathway is amino-acid degradation; D-alanine degradation; NH(3) and pyruvate from D-alanine: step 1/1. In terms of biological role, oxidative deamination of D-amino acids. The polypeptide is D-amino acid dehydrogenase (Acinetobacter baylyi (strain ATCC 33305 / BD413 / ADP1)).